Consider the following 557-residue polypeptide: Probable transcription factor sol4 (557 aa).

The fungal transcription factor domain stretch occupies residues 26–186 (IQYFFEDINW…EREMRRRMFC (161 aa)). The interval 463–490 (SGTQTRSMPSTETLTYNSSSSTSYGDGH) is disordered. Residues 472–485 (STETLTYNSSSSTS) are compositionally biased toward low complexity.

It localises to the nucleus. Its function is as follows. Probable transcription factor that regulates the expression of the gene cluster that mediates the biosynthesis of the phytotoxin solanapyrone, a causal agent of early blight disease of potato and tomato. The protein is Probable transcription factor sol4 (sol4) of Alternaria solani.